Reading from the N-terminus, the 88-residue chain is Small ribosomal subunit protein uS15 (88 aa).

Belongs to the universal ribosomal protein uS15 family. As to quaternary structure, part of the 30S ribosomal subunit. Forms a bridge to the 50S subunit in the 70S ribosome, contacting the 23S rRNA.

In terms of biological role, one of the primary rRNA binding proteins, it binds directly to 16S rRNA where it helps nucleate assembly of the platform of the 30S subunit by binding and bridging several RNA helices of the 16S rRNA. Functionally, forms an intersubunit bridge (bridge B4) with the 23S rRNA of the 50S subunit in the ribosome. The protein is Small ribosomal subunit protein uS15 of Geobacter sp. (strain M21).